Reading from the N-terminus, the 140-residue chain is CBS domain-containing protein YhcV (140 aa).

CBS domains are found at residues 8–64 (MTTQ…GRDG) and 72–127 (MSTE…NESA).

This is CBS domain-containing protein YhcV (yhcV) from Bacillus subtilis (strain 168).